Here is a 658-residue protein sequence, read N- to C-terminus: Glycogen debranching enzyme (658 aa).

Asp-336 functions as the Nucleophile in the catalytic mechanism. Residue Glu-371 is the Proton donor of the active site. A disordered region spans residues 459 to 486; that stretch reads EANGEENRDGTNSNYSDNNGKEGLGGPL.

It belongs to the glycosyl hydrolase 13 family.

The catalysed reaction is Hydrolysis of (1-&gt;6)-alpha-D-glucosidic linkages to branches with degrees of polymerization of three or four glucose residues in limit dextrin.. Its pathway is glycan degradation; glycogen degradation. Removes maltotriose and maltotetraose chains that are attached by 1,6-alpha-linkage to the limit dextrin main chain, generating a debranched limit dextrin. In Salmonella gallinarum (strain 287/91 / NCTC 13346), this protein is Glycogen debranching enzyme.